The following is a 183-amino-acid chain: NAD(P)H-quinone oxidoreductase subunit I, chloroplastic (183 aa).

4Fe-4S ferredoxin-type domains lie at 55–84 (GRIH…VDWK) and 95–124 (KSYS…MTEE). Positions 64, 67, 70, 74, 104, 107, 110, and 114 each coordinate [4Fe-4S] cluster.

Belongs to the complex I 23 kDa subunit family. In terms of assembly, NDH is composed of at least 16 different subunits, 5 of which are encoded in the nucleus. [4Fe-4S] cluster is required as a cofactor.

Its subcellular location is the plastid. The protein localises to the chloroplast thylakoid membrane. The enzyme catalyses a plastoquinone + NADH + (n+1) H(+)(in) = a plastoquinol + NAD(+) + n H(+)(out). It carries out the reaction a plastoquinone + NADPH + (n+1) H(+)(in) = a plastoquinol + NADP(+) + n H(+)(out). Its function is as follows. NDH shuttles electrons from NAD(P)H:plastoquinone, via FMN and iron-sulfur (Fe-S) centers, to quinones in the photosynthetic chain and possibly in a chloroplast respiratory chain. The immediate electron acceptor for the enzyme in this species is believed to be plastoquinone. Couples the redox reaction to proton translocation, and thus conserves the redox energy in a proton gradient. The protein is NAD(P)H-quinone oxidoreductase subunit I, chloroplastic of Anthoceros angustus (Hornwort).